The sequence spans 501 residues: Cytoplasmic tRNA 2-thiolation protein 2 (501 aa).

Basic and acidic residues predominate over residues 1 to 12 (MCEMSEEYRESA). Disordered stretches follow at residues 1 to 23 (MCEM…RLGT) and 192 to 214 (GVER…PTTA). Position 2 is an N-acetylcysteine (cysteine 2). A Phosphoserine modification is found at serine 492.

This sequence belongs to the CTU2/NCS2 family. As to quaternary structure, component of a complex at least composed of URM1, CTU2/NCS2 and CTU1/ATPBD3.

It is found in the cytoplasm. Its pathway is tRNA modification; 5-methoxycarbonylmethyl-2-thiouridine-tRNA biosynthesis. Functionally, plays a central role in 2-thiolation of mcm(5)S(2)U at tRNA wobble positions of tRNA(Lys), tRNA(Glu) and tRNA(Gln). May act by forming a heterodimer with CTU1/ATPBD3 that ligates sulfur from thiocarboxylated URM1 onto the uridine of tRNAs at wobble position. In Bos taurus (Bovine), this protein is Cytoplasmic tRNA 2-thiolation protein 2.